We begin with the raw amino-acid sequence, 756 residues long: IDESQTSLDTGVQRFTSSKIASSVQCFEDTKARIVKLIHKPELSVSTYDTAWVAMVPSPNSSNEPCFPDCLAWLLENQCCDGSWACPHHHPFLKKDVLSSTLACILALKKWGVGEEQINKGARFIEVNFASATEKSQISPTGFDIIFPAMLDYARDLFLDLRLEPTTFDNLIFRRDLELKRCYESHREAYLAYIAEGMGKLQDWESVMKYQRKNGSLFNSPSTTAAAFIALPNSGCLSYLHSALKKFGNAVPAAYPLDVYSRLRTVDNLESLGISRYFQKEIQQVLDETYRWWLQGSEEIFLDASTCALAFRTLRMNGYNVTSDAITKLLPDSFCGNMKDIGTTLELYRASEFILYPDEKDLEQQNLRLKDILEQELSSGFIHSEVNRALNYPFYAIMDRVAKRRNIEHYNFDNTRILKTSYCSPNFANKDFLFLSVEDFNNCQAMHREELKGKMRWVTENRLDELKFARSKSAYCYFSAAATFFAPDLSDARMSWAKNGVLTTVVDDFFDVGGSEEELKQLIRLVEIWDLDAITECSSQNVQIIFSSLKRTISEIGDKGFKLQGRSVTNHIIEIWLDLLYSMMKEAEWARDNHAPPMDDYISNAYVSFALGPIVLPCLYLVGPKLSEEMVRHSECHTLFRLMSTCGRLLNDIQTCERELKDGKLNAIPLYMINSGGETSKEAATQEMKSLIDRQRQELLRLVLTREGSLLPKPCKELFWHMSTVLHLFYCKDDGFTSQDLIKVVNEVIHEPVVLN.

Residues aspartate 507 and aspartate 511 each contribute to the Mg(2+) site. Residues 507 to 511 carry the DDXXD motif motif; the sequence is DDFFD. The helical transmembrane segment at 606-622 threads the bilayer; that stretch reads YVSFALGPIVLPCLYLV. Mg(2+) is bound by residues asparagine 651, threonine 655, and glutamate 659.

It belongs to the terpene synthase family. It depends on Mg(2+) as a cofactor. Present in both leaves and flowers.

Its subcellular location is the plastid. It is found in the chloroplast membrane. It carries out the reaction ent-copalyl diphosphate = ent-kaur-16-ene + diphosphate. It participates in plant hormone biosynthesis; gibberellin biosynthesis. Functionally, involved in the biosynthesis of labdane-type diterpenoid including marrubiin and other labdane-related furanoid diterpenoids with potential applications as anti-diabetics, analgesics or vasorelaxants. Terpene synthase that produces ent-kaurene from ent-copalyl diphosphate (ent-CPP). The chain is Ent-kaurene synthase, chloroplastic from Marrubium vulgare (White horehound).